A 335-amino-acid chain; its full sequence is Nucleoid-associated protein YejK (335 aa).

Belongs to the YejK family.

The protein resides in the cytoplasm. Its subcellular location is the nucleoid. The chain is Nucleoid-associated protein YejK from Escherichia coli (strain K12 / MC4100 / BW2952).